Reading from the N-terminus, the 406-residue chain is uncharacterized protein (406 aa).

The protein resides in the plastid. It localises to the chloroplast. This is an uncharacterized protein from Euglena gracilis.